The sequence spans 347 residues: Putative [LysW]-L-2-aminoadipate/[LysW]-L-glutamate phosphate reductase (347 aa).

9–12 (SGYI) serves as a coordination point for NADP(+). Residue C149 is part of the active site. An NADP(+)-binding site is contributed by N314.

Belongs to the NAGSA dehydrogenase family. Type 1 subfamily. LysY sub-subfamily.

The protein resides in the cytoplasm. The enzyme catalyses [amino-group carrier protein]-C-terminal-N-(1-carboxy-5-oxopentan-1-yl)-L-glutamine + phosphate + NADP(+) = [amino-group carrier protein]-C-terminal-N-(1-carboxy-5-phosphooxy-5-oxopentan-1-yl)-L-glutamine + NADPH + H(+). It carries out the reaction [amino-group carrier protein]-C-terminal-gamma-(L-glutamyl-5-semialdehyde)-L-glutamate + phosphate + NADP(+) = [amino-group carrier protein]-C-terminal-gamma-(5-phospho-L-glutamyl)-L-glutamate + NADPH + H(+). It participates in amino-acid biosynthesis; L-lysine biosynthesis via AAA pathway; L-lysine from L-alpha-aminoadipate (Thermus route): step 3/5. Its pathway is amino-acid biosynthesis; L-arginine biosynthesis. Its function is as follows. Involved in both the arginine and lysine biosynthetic pathways. The protein is Putative [LysW]-L-2-aminoadipate/[LysW]-L-glutamate phosphate reductase of Picrophilus torridus (strain ATCC 700027 / DSM 9790 / JCM 10055 / NBRC 100828 / KAW 2/3).